We begin with the raw amino-acid sequence, 548 residues long: Acetamidase (548 aa).

Residues K129 and S204 each act as charge relay system in the active site. The active-site Acyl-ester intermediate is the S228.

The protein belongs to the amidase family.

It catalyses the reaction a monocarboxylic acid amide + H2O = a monocarboxylate + NH4(+). The catalysed reaction is acetamide + H2O = acetate + NH4(+). Functionally, allows acetamide to be used as a sole carbon or nitrogen source. This chain is Acetamidase (amdS), found in Emericella nidulans (strain FGSC A4 / ATCC 38163 / CBS 112.46 / NRRL 194 / M139) (Aspergillus nidulans).